A 425-amino-acid polypeptide reads, in one-letter code: Glucan 1,3-beta-glucosidase (425 aa).

The first 17 residues, 1–17, serve as a signal peptide directing secretion; the sequence is MLLTFAPIFLLISSIVA. Glu214 (proton donor) is an active-site residue. Intrachain disulfides connect Cys301-Cys423 and Cys326-Cys352. Catalysis depends on Lys328, which acts as the Nucleophile.

Belongs to the glycosyl hydrolase 5 (cellulase A) family.

The protein localises to the secreted. The enzyme catalyses Successive hydrolysis of beta-D-glucose units from the non-reducing ends of (1-&gt;3)-beta-D-glucans, releasing alpha-glucose.. Functionally, beta-glucanases participate in the metabolism of beta-glucan, the main structural component of the cell wall. It could also function biosynthetically as a transglycosylase. The chain is Glucan 1,3-beta-glucosidase (EXG1) from Candida oleophila (Yeast).